The sequence spans 375 residues: Chaperone protein DnaJ (375 aa).

Residues 5 to 70 (DYYEVLGVSR…EKRARYDRFG (66 aa)) enclose the J domain. Residues 136 to 214 (GDEVTLRIPK…CRGAGQVQDI (79 aa)) form a CR-type zinc finger. 8 residues coordinate Zn(2+): Cys149, Cys152, Cys166, Cys169, Cys188, Cys191, Cys202, and Cys205. 4 CXXCXGXG motif repeats span residues 149–156 (CPDCSGSG), 166–173 (CPQCGGSG), 188–195 (CSACRGEG), and 202–209 (CPRCRGAG).

This sequence belongs to the DnaJ family. As to quaternary structure, homodimer. The cofactor is Zn(2+).

Its subcellular location is the cytoplasm. In terms of biological role, participates actively in the response to hyperosmotic and heat shock by preventing the aggregation of stress-denatured proteins and by disaggregating proteins, also in an autonomous, DnaK-independent fashion. Unfolded proteins bind initially to DnaJ; upon interaction with the DnaJ-bound protein, DnaK hydrolyzes its bound ATP, resulting in the formation of a stable complex. GrpE releases ADP from DnaK; ATP binding to DnaK triggers the release of the substrate protein, thus completing the reaction cycle. Several rounds of ATP-dependent interactions between DnaJ, DnaK and GrpE are required for fully efficient folding. Also involved, together with DnaK and GrpE, in the DNA replication of plasmids through activation of initiation proteins. In Oleidesulfovibrio alaskensis (strain ATCC BAA-1058 / DSM 17464 / G20) (Desulfovibrio alaskensis), this protein is Chaperone protein DnaJ.